Reading from the N-terminus, the 142-residue chain is 3-hydroxyacyl-[acyl-carrier-protein] dehydratase FabZ (142 aa).

Residue H48 is part of the active site.

The protein belongs to the thioester dehydratase family. FabZ subfamily.

Its subcellular location is the cytoplasm. It catalyses the reaction a (3R)-hydroxyacyl-[ACP] = a (2E)-enoyl-[ACP] + H2O. In terms of biological role, involved in unsaturated fatty acids biosynthesis. Catalyzes the dehydration of short chain beta-hydroxyacyl-ACPs and long chain saturated and unsaturated beta-hydroxyacyl-ACPs. In Prochlorococcus marinus (strain MIT 9313), this protein is 3-hydroxyacyl-[acyl-carrier-protein] dehydratase FabZ.